Consider the following 736-residue polypeptide: NADPH--cytochrome P450 reductase (736 aa).

Residue M1 is a topological domain, lumenal. Residues 2 to 24 traverse the membrane as a helical segment; that stretch reads AVSSSSDVIVLSVGIILAALYLF. The Cytoplasmic segment spans residues 25-736; the sequence is REQIFSAAKP…RNRLLLDVWS (712 aa). In terms of domain architecture, Flavodoxin-like spans 66-216; sequence IVIFYGSQTG…DYLEWKDGMW (151 aa). Residues 72–77, 123–126, 165–174, and D200 contribute to the FMN site; these read SQTGTA, ATYG, and LGNKTYEHYN. The FAD-binding FR-type domain maps to 269–546; the sequence is KNPYPAPIIA…EGPRGAYKQG (278 aa). An NADP(+)-binding site is contributed by R289. FAD-binding positions include 456 to 459, 474 to 476, Y480, and 495 to 498; these read RYYS, TVV, and GVGS. NADP(+) contacts are provided by residues T577, 648 to 649, and 659 to 663; these read SR and KIYVQ. W735 is a binding site for FAD.

It belongs to the NADPH--cytochrome P450 reductase family. This sequence in the N-terminal section; belongs to the flavodoxin family. In the C-terminal section; belongs to the flavoprotein pyridine nucleotide cytochrome reductase family. FAD serves as cofactor. The cofactor is FMN.

It localises to the endoplasmic reticulum membrane. It is found in the mitochondrion outer membrane. The protein resides in the cell membrane. The catalysed reaction is 2 oxidized [cytochrome P450] + NADPH = 2 reduced [cytochrome P450] + NADP(+) + H(+). This enzyme is required for electron transfer from NADP to cytochrome P450 in microsomes. It can also provide electron transfer to heme oxygenase and cytochrome B5. Involved in ergosterol biosynthesis. The sequence is that of NADPH--cytochrome P450 reductase (CPR) from Phanerodontia chrysosporium (White-rot fungus).